Here is an 892-residue protein sequence, read N- to C-terminus: MTDLTLKALAAERQVSVDRLVQQFADAGIRKSADDSVSAQEKQTLLAHLNREAVSGPDKLTLQRKTRSTLNIPGTGGKSKSVQIEVRKKRTFVKRDPQEAERLAAEEQAQREAEEQARREAEEQAKREAQQKAEREAAEQAKREAAEKAKREAAEKDKVSNQQTDDMTKTAQAEKARRENEAAELKRKAEEEARRKLEEEARRVAEEARRMAEENKWTATPEPVEDTSDYHVTTSQHARQAEDENDREVEGGRGRGRNAKAARPAKKGKHAESKADREEARAAVRGGKGGKRKGSSLQQGFQKPAQAVNRDVVIGETITVGELANKMAVKGSQVIKAMMKLGAMATINQVIDQETAQLVAEEMGHKVILRRENELEEAVMSDRDTGAAAEPRAPVVTIMGHVDHGKTSLLDYIRSTKVASGEAGGITQHIGAYHVETDNGMITFLDTPGHAAFTSMRARGAQATDIVVLVVAADDGVMPQTIEAIQHAKAAGVPVVVAVNKIDKPEADPDRVKNELSQYGILPEEWGGESQFVHVSAKAGTGIDELLDAILLQAEVLELKAVRKGMASGAVIESFLDKGRGPVATVLVREGTLHKGDIVLCGFEYGRVRAMRNELGQEVLEAGPSIPVEILGLSGVPAAGDEVTVVRDEKKAREVALYRQGKFREVKLARQQKSKLENMFVNMTEGEVHEVNIVLKADVQGSVEAISDSLLKLSTDEVKVKIIGSGVGGITETDATLAAASNAILVGFNVRADASARKVIESESLDLRYYSVIYNLIDEVKAAMSGMLSPELKQQIIGLAEVRDVFKSPKFGAIAGCMVTEGTIKRHNPIRVLRDNVVIYEGELESLRRFKDDVNEVRNGMECGIGVKNYNDVRVGDMIEVFEIIEIQRTIA.

The interval 66–305 is disordered; it reads TRSTLNIPGT…SLQQGFQKPA (240 aa). A compositionally biased stretch (polar residues) spans 68–82; that stretch reads STLNIPGTGGKSKSV. Composition is skewed to basic and acidic residues over residues 93-159 and 166-216; these read VKRD…KDKV and DMTK…EENK. Basic residues predominate over residues 254 to 269; it reads GRGRNAKAARPAKKGK. Positions 270–282 are enriched in basic and acidic residues; the sequence is HAESKADREEARA. The tr-type G domain occupies 391-560; it reads PRAPVVTIMG…LLQAEVLELK (170 aa). A G1 region spans residues 400 to 407; sequence GHVDHGKT. GTP is bound at residue 400–407; that stretch reads GHVDHGKT. Positions 425–429 are G2; it reads GITQH. The interval 446–449 is G3; it reads DTPG. GTP contacts are provided by residues 446-450 and 500-503; these read DTPGH and NKID. The G4 stretch occupies residues 500-503; it reads NKID. The tract at residues 536–538 is G5; sequence SAK.

This sequence belongs to the TRAFAC class translation factor GTPase superfamily. Classic translation factor GTPase family. IF-2 subfamily.

The protein localises to the cytoplasm. In terms of biological role, one of the essential components for the initiation of protein synthesis. Protects formylmethionyl-tRNA from spontaneous hydrolysis and promotes its binding to the 30S ribosomal subunits. Also involved in the hydrolysis of GTP during the formation of the 70S ribosomal complex. This chain is Translation initiation factor IF-2, found in Salmonella typhi.